Here is an 83-residue protein sequence, read N- to C-terminus: Large ribosomal subunit protein eL37 (83 aa).

Zn(2+)-binding residues include cysteine 19, cysteine 22, cysteine 34, and cysteine 37. The C4-type zinc finger occupies 19–37 (CRRCGRNSYHVQWERCAAC).

Belongs to the eukaryotic ribosomal protein eL37 family. Zn(2+) is required as a cofactor.

Binds to the 23S rRNA. The sequence is that of Large ribosomal subunit protein eL37 (RPL37) from Leishmania donovani.